We begin with the raw amino-acid sequence, 88 residues long: Acylphosphatase (88 aa).

An Acylphosphatase-like domain is found at alanine 3 to arginine 88. Active-site residues include arginine 18 and asparagine 36.

It belongs to the acylphosphatase family.

The catalysed reaction is an acyl phosphate + H2O = a carboxylate + phosphate + H(+). In Methanocella arvoryzae (strain DSM 22066 / NBRC 105507 / MRE50), this protein is Acylphosphatase (acyP).